The sequence spans 155 residues: 6,7-dimethyl-8-ribityllumazine synthase (155 aa).

5-amino-6-(D-ribitylamino)uracil-binding positions include Phe24, 58–60 (AFE), and 82–84 (AII). 87-88 (AT) lines the (2S)-2-hydroxy-3-oxobutyl phosphate pocket. His90 functions as the Proton donor in the catalytic mechanism. Phe115 is a 5-amino-6-(D-ribitylamino)uracil binding site. Residue Arg129 participates in (2S)-2-hydroxy-3-oxobutyl phosphate binding.

Belongs to the DMRL synthase family.

The enzyme catalyses (2S)-2-hydroxy-3-oxobutyl phosphate + 5-amino-6-(D-ribitylamino)uracil = 6,7-dimethyl-8-(1-D-ribityl)lumazine + phosphate + 2 H2O + H(+). It functions in the pathway cofactor biosynthesis; riboflavin biosynthesis; riboflavin from 2-hydroxy-3-oxobutyl phosphate and 5-amino-6-(D-ribitylamino)uracil: step 1/2. Its function is as follows. Catalyzes the formation of 6,7-dimethyl-8-ribityllumazine by condensation of 5-amino-6-(D-ribitylamino)uracil with 3,4-dihydroxy-2-butanone 4-phosphate. This is the penultimate step in the biosynthesis of riboflavin. The sequence is that of 6,7-dimethyl-8-ribityllumazine synthase from Prosthecochloris aestuarii (strain DSM 271 / SK 413).